Consider the following 479-residue polypeptide: Anaerobic nitric oxide reductase flavorubredoxin (479 aa).

The tract at residues Leu-30 to Ile-210 is zinc metallo-hydrolase. Positions 79, 81, 83, 147, 166, and 227 each coordinate Fe cation. The Flavodoxin-like domain maps to Ile-254–Ala-393. Residues Thr-260–Asn-264 and Ala-342–Leu-369 contribute to the FMN site. The Rubredoxin-like domain occupies Gly-423–Leu-474. 4 residues coordinate Fe cation: Cys-428, Cys-431, Cys-461, and Cys-464.

In the N-terminal section; belongs to the zinc metallo-hydrolase group 3 family. As to quaternary structure, homotetramer. It depends on Fe cation as a cofactor. The cofactor is FMN.

It is found in the cytoplasm. The protein operates within nitrogen metabolism; nitric oxide reduction. Its function is as follows. Anaerobic nitric oxide reductase; uses NADH to detoxify nitric oxide (NO), protecting several 4Fe-4S NO-sensitive enzymes. Has at least 2 reductase partners, only one of which (NorW, flavorubredoxin reductase) has been identified. NO probably binds to the di-iron center; electrons enter from the NorW at rubredoxin and are transferred sequentially to the FMN center and the di-iron center. Also able to function as an aerobic oxygen reductase. This is Anaerobic nitric oxide reductase flavorubredoxin from Salmonella paratyphi A (strain ATCC 9150 / SARB42).